Reading from the N-terminus, the 292-residue chain is Elongation factor Ts (292 aa).

An involved in Mg(2+) ion dislocation from EF-Tu region spans residues 81–84 (TDFV).

The protein belongs to the EF-Ts family.

Its subcellular location is the cytoplasm. Functionally, associates with the EF-Tu.GDP complex and induces the exchange of GDP to GTP. It remains bound to the aminoacyl-tRNA.EF-Tu.GTP complex up to the GTP hydrolysis stage on the ribosome. The sequence is that of Elongation factor Ts from Alkalilimnicola ehrlichii (strain ATCC BAA-1101 / DSM 17681 / MLHE-1).